We begin with the raw amino-acid sequence, 361 residues long: D-alanine--D-alanine ligase (361 aa).

The ATP-grasp domain occupies 134-344; the sequence is KLLLKSFNIP…FKDLVDNLIN (211 aa). 167 to 222 contributes to the ATP binding site; the sequence is REALGYPVIVKPAVLGSSIGINVAYSENQIEFFIEEALKYDLTILIEKFIEAREIE. Residues aspartate 297, glutamate 311, and asparagine 313 each contribute to the Mg(2+) site.

Belongs to the D-alanine--D-alanine ligase family. The cofactor is Mg(2+). Mn(2+) is required as a cofactor.

The protein resides in the cytoplasm. It carries out the reaction 2 D-alanine + ATP = D-alanyl-D-alanine + ADP + phosphate + H(+). The protein operates within cell wall biogenesis; peptidoglycan biosynthesis. Cell wall formation. The sequence is that of D-alanine--D-alanine ligase from Borrelia garinii subsp. bavariensis (strain ATCC BAA-2496 / DSM 23469 / PBi) (Borreliella bavariensis).